The following is a 327-amino-acid chain: GMP reductase (327 aa).

Cys175 (thioimidate intermediate) is an active-site residue. Residue 204-227 (IIADGGIRTNGDVAKSIRFGATMV) coordinates NADP(+).

It belongs to the IMPDH/GMPR family. GuaC type 2 subfamily.

The enzyme catalyses IMP + NH4(+) + NADP(+) = GMP + NADPH + 2 H(+). Its function is as follows. Catalyzes the irreversible NADPH-dependent deamination of GMP to IMP. It functions in the conversion of nucleobase, nucleoside and nucleotide derivatives of G to A nucleotides, and in maintaining the intracellular balance of A and G nucleotides. This is GMP reductase from Bacillus anthracis.